The primary structure comprises 322 residues: Transcription factor WRKY45-2 (322 aa).

Positions 67-110 are disordered; sequence GGEGSEVQSEVTCGGGASAGGKRKAPAANRKANCRRRTQQSSGN. Positions 112 to 180 form a DNA-binding region, WRKY; it reads VVVKNLDDGQ…YIGEHTCRDP (69 aa). Residues 256–284 form a disordered region; sequence SDQEEVLSSLTPGSSAARGGGVAGPFGPD.

Belongs to the WRKY group III family. In terms of tissue distribution, expressed in aleurone cells.

It is found in the nucleus. Transcriptional activator involved in defense responses against pathogens. Acts as a positive regulator of defense responses against the rice blast fungus Magnaporthe oryzae. Acts as a positive regulator of defense responses against the bacterial blight Xanthomonas oryzae pv oryzae (Xoo) and the bacterial streak Xanthomonas oryzae pv oryzicola (Xoc). Acts as a positive regulator of abscisic acid (ABA) signaling that suppresses growth of seedlings. Acts as a negative regulator of salt stress response. Acts as a negative regulator of cold stress response. Acts as a negative regulator of drought stress response. The sequence is that of Transcription factor WRKY45-2 from Oryza sativa subsp. indica (Rice).